The primary structure comprises 297 residues: uncharacterized protein (297 aa).

Disordered regions lie at residues asparagine 19–glutamate 133, alanine 147–alanine 214, and glutamate 226–alanine 277. The span at glutamate 41–aspartate 52 shows a compositional bias: basic and acidic residues. Residues proline 77–phenylalanine 87 show a composition bias toward acidic residues. The span at proline 88–arginine 101 shows a compositional bias: polar residues. 2 stretches are compositionally biased toward basic and acidic residues: residues alanine 147–tryptophan 161 and isoleucine 236–glycine 268.

This is an uncharacterized protein from Caenorhabditis elegans.